Here is a 174-residue protein sequence, read N- to C-terminus: Repair DNA polymerase X (174 aa).

Residues 42–51 (REEKMLNDVD) form an involved in ssDNA binding region. Mg(2+) is bound by residues Asp-49 and Asp-51. Cys-81 and Cys-86 form a disulfide bridge. Asp-100 is a binding site for Mg(2+).

It belongs to the DNA polymerase type-X family. Mg(2+) serves as cofactor.

The protein resides in the virion. It catalyses the reaction DNA(n) + a 2'-deoxyribonucleoside 5'-triphosphate = DNA(n+1) + diphosphate. Its function is as follows. Error-prone polymerase lacking a proofreading 3'-5' exonuclease which catalyzes the gap-filling reaction during the DNA repair process. Specifically binds intermediates in the single-nucleotide base-excision repair process. Also catalyzes DNA polymerization with low nucleotide-insertion fidelity. Probably acts as a strategic DNA mutase, which gives rise to a rapid emergence of variants. Generates mismatched G-G pairs, in that case, the polymerase first binds the deoxynucleotide followed by mismatch formation. Together with the viral DNA ligase, fills the single nucleotide gaps generated by the AP endonuclease. Binds DNA with high affinity via the helix alphaE. This African swine fever virus (isolate Tick/South Africa/Pretoriuskop Pr4/1996) (ASFV) protein is Repair DNA polymerase X.